Consider the following 229-residue polypeptide: Potassium/proton antiporter CemA (229 aa).

Helical transmembrane passes span leucine 7 to phenylalanine 27, isoleucine 114 to leucine 134, isoleucine 154 to isoleucine 174, and isoleucine 189 to isoleucine 209.

This sequence belongs to the CemA family.

The protein resides in the plastid. It localises to the chloroplast inner membrane. The catalysed reaction is K(+)(in) + H(+)(out) = K(+)(out) + H(+)(in). In terms of biological role, contributes to K(+)/H(+) antiport activity by supporting proton efflux to control proton extrusion and homeostasis in chloroplasts in a light-dependent manner to modulate photosynthesis. Prevents excessive induction of non-photochemical quenching (NPQ) under continuous-light conditions. Indirectly promotes efficient inorganic carbon uptake into chloroplasts. This is Potassium/proton antiporter CemA from Fagus sylvatica (Beechnut).